The sequence spans 797 residues: Complex I intermediate-associated protein 84, mitochondrial (797 aa).

Residues 1–69 constitute a mitochondrion transit peptide; the sequence is MRSHLARNAT…ALCTRTSKRT (69 aa).

The protein resides in the mitochondrion. Functionally, chaperone protein involved in the assembly of the mitochondrial NADH:ubiquinone oxidoreductase complex (complex I). The protein is Complex I intermediate-associated protein 84, mitochondrial (cia84) of Neurospora crassa (strain ATCC 24698 / 74-OR23-1A / CBS 708.71 / DSM 1257 / FGSC 987).